We begin with the raw amino-acid sequence, 264 residues long: Thymidylate synthase (264 aa).

A dUMP-binding site is contributed by Arg-21. Residue His-51 participates in (6R)-5,10-methylene-5,6,7,8-tetrahydrofolate binding. DUMP is bound at residue 126 to 127 (RR). Cys-146 serves as the catalytic Nucleophile. DUMP is bound by residues 166–169 (RSAD), Asn-177, and 207–209 (HLY). Position 169 (Asp-169) interacts with (6R)-5,10-methylene-5,6,7,8-tetrahydrofolate. (6R)-5,10-methylene-5,6,7,8-tetrahydrofolate is bound at residue Ala-263.

This sequence belongs to the thymidylate synthase family. Bacterial-type ThyA subfamily. Homodimer.

Its subcellular location is the cytoplasm. The catalysed reaction is dUMP + (6R)-5,10-methylene-5,6,7,8-tetrahydrofolate = 7,8-dihydrofolate + dTMP. It participates in pyrimidine metabolism; dTTP biosynthesis. In terms of biological role, catalyzes the reductive methylation of 2'-deoxyuridine-5'-monophosphate (dUMP) to 2'-deoxythymidine-5'-monophosphate (dTMP) while utilizing 5,10-methylenetetrahydrofolate (mTHF) as the methyl donor and reductant in the reaction, yielding dihydrofolate (DHF) as a by-product. This enzymatic reaction provides an intracellular de novo source of dTMP, an essential precursor for DNA biosynthesis. The sequence is that of Thymidylate synthase from Bartonella henselae (strain ATCC 49882 / DSM 28221 / CCUG 30454 / Houston 1) (Rochalimaea henselae).